Here is a 299-residue protein sequence, read N- to C-terminus: Lipoyl synthase 2 (299 aa).

[4Fe-4S] cluster contacts are provided by Cys45, Cys50, Cys56, Cys71, Cys75, Cys78, and Ser295. Positions 57-284 constitute a Radical SAM core domain; the sequence is YASGTATFLL…KSFCSKLGFK (228 aa).

It belongs to the radical SAM superfamily. Lipoyl synthase family. The cofactor is [4Fe-4S] cluster.

It localises to the cytoplasm. It catalyses the reaction [[Fe-S] cluster scaffold protein carrying a second [4Fe-4S](2+) cluster] + N(6)-octanoyl-L-lysyl-[protein] + 2 oxidized [2Fe-2S]-[ferredoxin] + 2 S-adenosyl-L-methionine + 4 H(+) = [[Fe-S] cluster scaffold protein] + N(6)-[(R)-dihydrolipoyl]-L-lysyl-[protein] + 4 Fe(3+) + 2 hydrogen sulfide + 2 5'-deoxyadenosine + 2 L-methionine + 2 reduced [2Fe-2S]-[ferredoxin]. It participates in protein modification; protein lipoylation via endogenous pathway; protein N(6)-(lipoyl)lysine from octanoyl-[acyl-carrier-protein]: step 2/2. Catalyzes the radical-mediated insertion of two sulfur atoms into the C-6 and C-8 positions of the octanoyl moiety bound to the lipoyl domains of lipoate-dependent enzymes, thereby converting the octanoylated domains into lipoylated derivatives. In Prochlorococcus marinus subsp. pastoris (strain CCMP1986 / NIES-2087 / MED4), this protein is Lipoyl synthase 2.